A 426-amino-acid chain; its full sequence is Glutamate-1-semialdehyde 2,1-aminomutase (426 aa).

Lys265 is subject to N6-(pyridoxal phosphate)lysine.

It belongs to the class-III pyridoxal-phosphate-dependent aminotransferase family. HemL subfamily. As to quaternary structure, homodimer. It depends on pyridoxal 5'-phosphate as a cofactor.

It is found in the cytoplasm. The enzyme catalyses (S)-4-amino-5-oxopentanoate = 5-aminolevulinate. Its pathway is porphyrin-containing compound metabolism; protoporphyrin-IX biosynthesis; 5-aminolevulinate from L-glutamyl-tRNA(Glu): step 2/2. This is Glutamate-1-semialdehyde 2,1-aminomutase from Salmonella schwarzengrund (strain CVM19633).